The primary structure comprises 839 residues: MEKIYNHKIVEKDKNEKWIKKEYFSTHDLTKKPFSILLPPPNVTGKLHIGHAWNTTLQDFLIRLKRLQGYDVLWLPGTDHAGIATQAKVEKRLLDQKIFKSDLTKEELFEKAMDWKNEYANEIKKQWSKLGLALDYKKERFTLDELSNKAVNDIFVMLYKDGYIYRGNRAIYYDTFLQTSLSNIEVINVEKESKMYYLKYFLENSNSEYVLVATTRPETLASDVALIINPNDKKNSHYLGKNFVNPLTKKIIKMHSDDYAIMNFGSGIVKISAHDMNDFDVIKRLNLEVIETIDKFGKMTNAIPEFENMSSLEARENIVLKLKKENLIDKIENIKSNIIMSERSNTVAEVLVMPQWFIKMEPFSKMILKKIQNENEDDKKVLFFPKKFENILKIWMQEAHDWNISRQLWWGHKIPAWYDEKGNIKVQTTSPGSNWTQDQDVLDTWFSSGIAPFSFLNWPQKSEFLKRYYPTSVIVTAYDIIFFWVARMYFMGIYSMKNIPFKKALIHGLIRDEQGRKMSKSLGNGIDPMDLIEKYGADSLRWFLMTNSTPGQDIRFNYDKIESAWSLINKIWNISRYIKMLDSDKKEIIPEEIEQNANSWILEKFENLKILIYEKSETFEFSVIGKEIFKFINEDFSSVYIEIIKGTDSKEFISKIWSNFLILLHPFLPFLTDHLYFELNKKELLESDFFELKSRKNNLFIDETIEIISTLREYRTRFNLSHKIDLNYNLVSINNSNQCDFNLDLKKYLIKKMANANFSENGQIFFKLNNYELRLQIPEEVKKEEETIRIKRILFLESEIKRSQSILSNEKFINNASEIKVKEEKEKLEKYIKEFEEIK.

The short motif at 41-51 is the 'HIGH' region element; that stretch reads PNVTGKLHIGH. Positions 315 to 343 form a coiled coil; it reads RENIVLKLKKENLIDKIENIKSNIIMSER. A 'KMSKS' region motif is present at residues 517–521; that stretch reads KMSKS. ATP is bound at residue Lys-520. Positions 813 to 839 form a coiled coil; the sequence is INNASEIKVKEEKEKLEKYIKEFEEIK.

Belongs to the class-I aminoacyl-tRNA synthetase family. ValS type 1 subfamily. Monomer.

The protein localises to the cytoplasm. The catalysed reaction is tRNA(Val) + L-valine + ATP = L-valyl-tRNA(Val) + AMP + diphosphate. In terms of biological role, catalyzes the attachment of valine to tRNA(Val). As ValRS can inadvertently accommodate and process structurally similar amino acids such as threonine, to avoid such errors, it has a 'posttransfer' editing activity that hydrolyzes mischarged Thr-tRNA(Val) in a tRNA-dependent manner. This is Valine--tRNA ligase from Mycoplasma mobile (strain ATCC 43663 / 163K / NCTC 11711) (Mesomycoplasma mobile).